Here is a 362-residue protein sequence, read N- to C-terminus: Dihydroorotate dehydrogenase (quinone) (362 aa).

FMN is bound by residues 62–66 (AGYDK) and threonine 86. Lysine 66 provides a ligand contact to substrate. Substrate is bound at residue 111–115 (NRLGF). Positions 139 and 170 each coordinate FMN. Asparagine 170 contacts substrate. Serine 173 acts as the Nucleophile in catalysis. Asparagine 175 serves as a coordination point for substrate. The FMN site is built by lysine 215 and serine 243. 244 to 245 (NT) is a binding site for substrate. FMN-binding positions include glycine 266, glycine 295, and 316-317 (YS).

Belongs to the dihydroorotate dehydrogenase family. Type 2 subfamily. As to quaternary structure, monomer. It depends on FMN as a cofactor.

It localises to the cell membrane. It catalyses the reaction (S)-dihydroorotate + a quinone = orotate + a quinol. Its pathway is pyrimidine metabolism; UMP biosynthesis via de novo pathway; orotate from (S)-dihydroorotate (quinone route): step 1/1. Catalyzes the conversion of dihydroorotate to orotate with quinone as electron acceptor. The sequence is that of Dihydroorotate dehydrogenase (quinone) from Rhizobium johnstonii (strain DSM 114642 / LMG 32736 / 3841) (Rhizobium leguminosarum bv. viciae).